We begin with the raw amino-acid sequence, 832 residues long: MPLSCQHFRKLLLLDEEAGPLEEELPRLADEGLNHRVAEDLNLQLPNVSIPWTHKVGNFTGLYSSTAPVFNPNWQTPSFPDIHLHQDIINKCEQLVGPLTVNEKRRLKLIMPARFYPNSTKYFPPDKGIKPYYPEHGVNHYFQARHYLHTLWKAGVLYKRETTRSASFCGSPYSWEQELQHGAEPFCHQPFGILPRASIGPAVPSQHKQSRLGLQSQQGHLARSHQGRSGSIWARVHSTSRRSFGVEPAGSGRNHNTASSSSSCLHQSAVRKAAYSHLSTFERHSSSGHAVELHGFPPSSAGSQSKGSVFPCWWLQFRDSEPCSDNCLSHIVNLLEDWGPCTEHGEHLIRIPRTPARVTGGVFLVDKNPHNSSESRLVVDFSQFSRGSTRVSWPKFAVPNLQSLTNLLSSNLSWLSLDVSAAFYHLPLHPAAMPHLLVGSSGLPRYVARLSSTSRNHHHQRGTMQNLHDFCSRNLFVSLMLLYKTFGRKLHLYSHPTIMGFRKIPMGVGLSPFLLAQFTSALCSVVRRAFPHCLAFSYMDDMVLGAKSVQHLESLYTAVTNFLLSLGIHLNPGKTKRWGYSLHFMGYVIGSWGTLPQDHIVQKIKQCFRKLPVNRPIDWKVCQRIVGLLGFAAPFTQCGYPALMPLYNCIHNRQAFTFSPTYKAFLRTQYLTLYPVARQRPGLCQVFADATPTGWGLALGPQRMRGTFVAPLPIHTAELLAACFARSRSGANIIGTDNSVVLSRKYTSFPWLLGCAANWILRGTSFVYVPSALNPADDPSRGRLGLYRPLLRLPFRPTTGRTSLYAVSPSVPSHLPVRVHFASPLHVAWRPP.

The segment at 1–177 (MPLSCQHFRK…FCGSPYSWEQ (177 aa)) is terminal protein domain (TP). Residues 178–335 (ELQHGAEPFC…NCLSHIVNLL (158 aa)) are spacer. Residues 198-264 (SIGPAVPSQH…HNTASSSSSC (67 aa)) form a disordered region. Positions 336-679 (EDWGPCTEHG…YLTLYPVARQ (344 aa)) are polymerase/reverse transcriptase domain (RT). One can recognise a Reverse transcriptase domain in the interval 346–589 (EHLIRIPRTP…YSLHFMGYVI (244 aa)). Positions 418, 540, and 541 each coordinate Mg(2+).

It belongs to the hepadnaviridae P protein family.

It catalyses the reaction DNA(n) + a 2'-deoxyribonucleoside 5'-triphosphate = DNA(n+1) + diphosphate. It carries out the reaction Endonucleolytic cleavage to 5'-phosphomonoester.. Its activity is regulated as follows. Activated by host HSP70 and HSP40 in vitro to be able to bind the epsilon loop of the pgRNA. Because deletion of the RNase H region renders the protein partly chaperone-independent, the chaperones may be needed indirectly to relieve occlusion of the RNA-binding site by this domain. Inhibited by several reverse-transcriptase inhibitors: Lamivudine, Adefovir and Entecavir. Functionally, multifunctional enzyme that converts the viral RNA genome into dsDNA in viral cytoplasmic capsids. This enzyme displays a DNA polymerase activity that can copy either DNA or RNA templates, and a ribonuclease H (RNase H) activity that cleaves the RNA strand of RNA-DNA heteroduplexes in a partially processive 3'- to 5'-endonucleasic mode. Neo-synthesized pregenomic RNA (pgRNA) are encapsidated together with the P protein, and reverse-transcribed inside the nucleocapsid. Initiation of reverse-transcription occurs first by binding the epsilon loop on the pgRNA genome, and is initiated by protein priming, thereby the 5'-end of (-)DNA is covalently linked to P protein. Partial (+)DNA is synthesized from the (-)DNA template and generates the relaxed circular DNA (RC-DNA) genome. After budding and infection, the RC-DNA migrates in the nucleus, and is converted into a plasmid-like covalently closed circular DNA (cccDNA). The activity of P protein does not seem to be necessary for cccDNA generation, and is presumably released from (+)DNA by host nuclear DNA repair machinery. In Pongo pygmaeus (Bornean orangutan), this protein is Protein P.